The following is a 565-amino-acid chain: NAD-dependent malic enzyme (565 aa).

The active-site Proton donor is the tyrosine 104. Arginine 157 serves as a coordination point for NAD(+). The active-site Proton acceptor is lysine 175. A divalent metal cation contacts are provided by glutamate 246, aspartate 247, and aspartate 270. NAD(+)-binding residues include aspartate 270 and asparagine 418.

The protein belongs to the malic enzymes family. In terms of assembly, homotetramer. Requires Mg(2+) as cofactor. The cofactor is Mn(2+).

The enzyme catalyses (S)-malate + NAD(+) = pyruvate + CO2 + NADH. The catalysed reaction is oxaloacetate + H(+) = pyruvate + CO2. The polypeptide is NAD-dependent malic enzyme (Pectobacterium atrosepticum (strain SCRI 1043 / ATCC BAA-672) (Erwinia carotovora subsp. atroseptica)).